The following is a 345-amino-acid chain: MAESCRVRRIKLGSQGLEVSAQGLGCMGLTGHYGASKPETEAIALIHHAIHSGVTFLDTSDMYGPETNEILLGKALKDGVREKVELATKFGISYAEGNREIKGDPAYVRAACEASLKRLDVTCIDLYYQHRIDTRVPIEITMGELKKLIEEGKIKYIGLSEASASTIRRAHTVHPITAVQLEWSLWTRDVEEEIVPTCRELGIGIVSYSPLGRGFFASGPKLVENLDNNDFRKALPRFQQENLDHNKILYEKVSAMSEKKGCTPAQLALAWVHHQGDDVCPIPGTTKIENLNQNIRALSVKLTPEEMSELETIAQPESVKGERYMATVPTFKNSDTPPLSSWNAV.

Tyr63 acts as the Proton donor in catalysis. His130 is a binding site for substrate. Residue 209–219 coordinates NADP(+); it reads SPLGRGFFASG.

The protein belongs to the aldo/keto reductase family.

The chain is Probable aldo-keto reductase 3 from Arabidopsis thaliana (Mouse-ear cress).